Reading from the N-terminus, the 246-residue chain is Small ribosomal subunit protein uS2 (246 aa).

The segment at 226-246 is disordered; the sequence is QGEEEAEVAEETAPETETTTA. The span at 229–239 shows a compositional bias: acidic residues; the sequence is EEAEVAEETAP.

Belongs to the universal ribosomal protein uS2 family. As to quaternary structure, part of the 30S ribosomal subunit. Interacts with BrxC.

This is Small ribosomal subunit protein uS2 (rpsB) from Bacillus subtilis (strain 168).